Consider the following 130-residue polypeptide: Methylglyoxal synthase (130 aa).

In terms of domain architecture, MGS-like spans Met-1–Pro-130. Substrate contacts are provided by residues His-12, Lys-16, Thr-38–Thr-41, and Ser-58–Gly-59. The active-site Proton donor/acceptor is the Asp-64. His-91 serves as a coordination point for substrate.

Belongs to the methylglyoxal synthase family.

It carries out the reaction dihydroxyacetone phosphate = methylglyoxal + phosphate. In terms of biological role, catalyzes the formation of methylglyoxal from dihydroxyacetone phosphate. The polypeptide is Methylglyoxal synthase (Cupriavidus pinatubonensis (strain JMP 134 / LMG 1197) (Cupriavidus necator (strain JMP 134))).